A 367-amino-acid chain; its full sequence is Aspartate-semialdehyde dehydrogenase (367 aa).

Residues 10–13 (RGMV), 37–38 (TS), and glutamine 73 each bind NADP(+). A phosphate-binding site is contributed by arginine 102. Catalysis depends on cysteine 135, which acts as the Acyl-thioester intermediate. Cysteine 135 is subject to S-cysteinyl cysteine; in inhibited form. A substrate-binding site is contributed by glutamine 162. NADP(+) is bound by residues 165–166 (SG) and proline 193. Residue glutamate 241 coordinates substrate. Lysine 244 is a binding site for phosphate. Arginine 267 contacts substrate. The active-site Proton acceptor is histidine 274. Residue glutamine 350 coordinates NADP(+).

The protein belongs to the aspartate-semialdehyde dehydrogenase family. Homodimer.

The enzyme catalyses L-aspartate 4-semialdehyde + phosphate + NADP(+) = 4-phospho-L-aspartate + NADPH + H(+). Its pathway is amino-acid biosynthesis; L-lysine biosynthesis via DAP pathway; (S)-tetrahydrodipicolinate from L-aspartate: step 2/4. It participates in amino-acid biosynthesis; L-methionine biosynthesis via de novo pathway; L-homoserine from L-aspartate: step 2/3. The protein operates within amino-acid biosynthesis; L-threonine biosynthesis; L-threonine from L-aspartate: step 2/5. In terms of biological role, catalyzes the NADPH-dependent formation of L-aspartate-semialdehyde (L-ASA) by the reductive dephosphorylation of L-aspartyl-4-phosphate. This chain is Aspartate-semialdehyde dehydrogenase, found in Escherichia coli O6:H1 (strain CFT073 / ATCC 700928 / UPEC).